Here is a 364-residue protein sequence, read N- to C-terminus: Growth hormone secretagogue receptor type 1 (364 aa).

At 1-40 the chain is on the extracellular side; the sequence is MWNATPSEEPEPNVTLDLDWDASPGNDSLSDELLPLFPAP. N13 and N26 each carry an N-linked (GlcNAc...) asparagine glycan. Residues 41–66 form a helical membrane-spanning segment; sequence LLAGVTATCVALFVVGISGNLLTMLV. At 67 to 72 the chain is on the cytoplasmic side; sequence VSRFRE. The chain crosses the membrane as a helical span at residues 73–96; sequence LRTTTNLYLSSMAFSDLLIFLCMP. The Extracellular portion of the chain corresponds to 97–117; sequence LDLVRLWQYRPWNFGDLLCKL. C115 and C197 are disulfide-bonded. A helical membrane pass occupies residues 118 to 139; sequence FQFVSESCTYATVLTITALSVE. Residues 140-162 lie on the Cytoplasmic side of the membrane; it reads RYFAICFPLRAKVVVTKGRVKLV. Residues 163–183 traverse the membrane as a helical segment; sequence ILVIWAVAFCSAGPIFVLVGV. Residues 184–211 are Extracellular-facing; sequence EHENGTDPRDTNECRATEFAVRSGLLTV. N-linked (GlcNAc...) asparagine glycosylation occurs at N187. A helical transmembrane segment spans residues 212–235; sequence MVWVSSVFFFLPVFCLTVLYSLIG. At 236 to 263 the chain is on the cytoplasmic side; sequence RKLWRRRGDAAVGSSLRDQNHKQTVKML. Residues 264–285 form a helical membrane-spanning segment; sequence AVVVFAFILCWLPFHVGRYLFS. The Extracellular segment spans residues 286 to 302; the sequence is KSFEPGSLEIAQISQYC. A helical membrane pass occupies residues 303 to 326; it reads NLVSFVLFYLSAAINPILYNIMSK. The Cytoplasmic portion of the chain corresponds to 327–364; sequence KYRVAVFKLLGFESFSQRKLSTLKDESSRAWTKSSINT.

Belongs to the G-protein coupled receptor 1 family.

Its subcellular location is the cell membrane. In terms of biological role, receptor for ghrelin, coupled to G-alpha-11 proteins. Stimulates growth hormone secretion. Also binds other growth hormone releasing peptides (GHRP) (e.g. Met-enkephalin and GHRP-6) as well as non-peptide, low molecular weight secretagogues (e.g. L-692,429, MK-0677, adenosine). The protein is Growth hormone secretagogue receptor type 1 (Ghsr) of Mus musculus (Mouse).